The primary structure comprises 278 residues: Sulfur carrier protein FdhD (278 aa).

The active-site Cysteine persulfide intermediate is cysteine 121. 260–265 (FCKPGR) provides a ligand contact to Mo-bis(molybdopterin guanine dinucleotide).

The protein belongs to the FdhD family.

It localises to the cytoplasm. Functionally, required for formate dehydrogenase (FDH) activity. Acts as a sulfur carrier protein that transfers sulfur from IscS to the molybdenum cofactor prior to its insertion into FDH. In Salmonella heidelberg (strain SL476), this protein is Sulfur carrier protein FdhD.